A 184-amino-acid polypeptide reads, in one-letter code: NADH-quinone oxidoreductase subunit B (184 aa).

[4Fe-4S] cluster contacts are provided by cysteine 63, cysteine 64, cysteine 128, and cysteine 158.

It belongs to the complex I 20 kDa subunit family. NDH-1 is composed of 14 different subunits. Subunits NuoB, C, D, E, F, and G constitute the peripheral sector of the complex. Requires [4Fe-4S] cluster as cofactor.

The protein resides in the cell inner membrane. It catalyses the reaction a quinone + NADH + 5 H(+)(in) = a quinol + NAD(+) + 4 H(+)(out). Its function is as follows. NDH-1 shuttles electrons from NADH, via FMN and iron-sulfur (Fe-S) centers, to quinones in the respiratory chain. Couples the redox reaction to proton translocation (for every two electrons transferred, four hydrogen ions are translocated across the cytoplasmic membrane), and thus conserves the redox energy in a proton gradient. This chain is NADH-quinone oxidoreductase subunit B, found in Xylella fastidiosa (strain 9a5c).